The primary structure comprises 273 residues: Nickel import ATP-binding protein NikE (273 aa).

One can recognise an ABC transporter domain in the interval 13–252 (YRTGGLLRKR…AHPVGRQLQA (240 aa)). 45-52 (GSSGSGKS) serves as a coordination point for ATP.

The protein belongs to the ABC transporter superfamily. Nickel importer (TC 3.A.1.5.3) family. In terms of assembly, the complex is composed of two ATP-binding proteins (NikD and NikE), two transmembrane proteins (NikB and NikC) and a solute-binding protein (NikA).

The protein localises to the cell inner membrane. The catalysed reaction is Ni(2+)(out) + ATP + H2O = Ni(2+)(in) + ADP + phosphate + H(+). In terms of biological role, part of the ABC transporter complex NikABCDE involved in nickel import. Responsible for energy coupling to the transport system. The sequence is that of Nickel import ATP-binding protein NikE from Pseudomonas putida (strain ATCC 47054 / DSM 6125 / CFBP 8728 / NCIMB 11950 / KT2440).